The following is a 1032-amino-acid chain: Kinesin heavy chain isoform 5A (1032 aa).

Ala2 carries the N-acetylalanine modification. Residues 9–327 enclose the Kinesin motor domain; sequence SIKVLCRFRP…LMFGQRAKTI (319 aa). ATP is bound at residue 86–93; it reads GQTSSGKT. The segment at 174–315 is microtubule-binding; sequence VSGPEEILDV…PSSYNDAETK (142 aa). Residues 271-361 form a necessary for interaction with ZFYVE27 region; it reads EGTKSYVPYR…KTKAQKETIA (91 aa). Residues 331-906 adopt a coiled-coil conformation; it reads ASVNLELTAE…VDRIKEAVRY (576 aa). The tract at residues 353-1032 is interaction with BICD2; that stretch reads TKAQKETIAK…FPLHQETAAS (680 aa). Phosphothreonine is present on Thr397. The interval 904 to 939 is disordered; that stretch reads VRYKSSGKRGHSAQIAKPVRPGHYPASSPTNPYGTR. The tract at residues 907-1032 is globular; it reads KSSGKRGHSA…FPLHQETAAS (126 aa).

The protein belongs to the TRAFAC class myosin-kinesin ATPase superfamily. Kinesin family. Kinesin subfamily. As to quaternary structure, oligomer composed of two heavy chains and two light chains. Interacts with GRIP1. Interacts with FMR1 (via C-terminus); this interaction is increased in a mGluR-dependent manner. Interacts with BORCS5. Interacts with ZFYVE27. Interacts with VAPA, VAPB, SURF4, RAB11A (GDP-bound form), RAB11B (GDP-bound form) and RTN3 in a ZFYVE27-dependent manner. Interacts with BICD2. Interacts with DTNB.

The protein resides in the cytoplasm. The protein localises to the perinuclear region. It is found in the cytoskeleton. It localises to the perikaryon. The enzyme catalyses ATP + H2O + a kinesin associated with a microtubule at position (n) = ADP + phosphate a kinesin associated with a microtubule at position (n+1, toward the plus end).. Functionally, microtubule-dependent motor required for slow axonal transport of neurofilament proteins (NFH, NFM and NFL). Can induce formation of neurite-like membrane protrusions in non-neuronal cells in a ZFYVE27-dependent manner. The ZFYVE27-KIF5A complex contributes to the vesicular transport of VAPA, VAPB, SURF4, RAB11A, RAB11B and RTN3 proteins in neurons. Required for anterograde axonal transportation of MAPK8IP3/JIP3 which is essential for MAPK8IP3/JIP3 function in axon elongation. This chain is Kinesin heavy chain isoform 5A (KIF5A), found in Pongo abelii (Sumatran orangutan).